The primary structure comprises 177 residues: Nucleoside-triphosphatase THEP1 (177 aa).

ATP is bound by residues 10 to 17 (GKPGIGKT) and 101 to 108 (CLVIDEIG).

This sequence belongs to the THEP1 NTPase family.

The catalysed reaction is a ribonucleoside 5'-triphosphate + H2O = a ribonucleoside 5'-diphosphate + phosphate + H(+). Its function is as follows. Has nucleotide phosphatase activity towards ATP, GTP, CTP, TTP and UTP. May hydrolyze nucleoside diphosphates with lower efficiency. The sequence is that of Nucleoside-triphosphatase THEP1 from Natranaerobius thermophilus (strain ATCC BAA-1301 / DSM 18059 / JW/NM-WN-LF).